Reading from the N-terminus, the 427-residue chain is Glutamyl-tRNA reductase (427 aa).

Residues 49 to 52 (TCNR), Ser-105, 110 to 112 (EPQ), and Gln-116 each bind substrate. Residue Cys-50 is the Nucleophile of the active site. 185–190 (AAGEMN) provides a ligand contact to NADP(+).

Belongs to the glutamyl-tRNA reductase family. Homodimer.

It carries out the reaction (S)-4-amino-5-oxopentanoate + tRNA(Glu) + NADP(+) = L-glutamyl-tRNA(Glu) + NADPH + H(+). Its pathway is porphyrin-containing compound metabolism; protoporphyrin-IX biosynthesis; 5-aminolevulinate from L-glutamyl-tRNA(Glu): step 1/2. Functionally, catalyzes the NADPH-dependent reduction of glutamyl-tRNA(Glu) to glutamate 1-semialdehyde (GSA). The chain is Glutamyl-tRNA reductase from Acinetobacter baumannii (strain AB307-0294).